A 459-amino-acid chain; its full sequence is Cysteine--tRNA ligase (459 aa).

Cysteine 28 is a Zn(2+) binding site. The 'HIGH' region motif lies at 30–40 (VTVYDLCHIGH). Zn(2+) contacts are provided by cysteine 209, histidine 234, and glutamate 238. The 'KMSKS' region signature appears at 266–270 (KMSKS). Residue lysine 269 participates in ATP binding.

It belongs to the class-I aminoacyl-tRNA synthetase family. As to quaternary structure, monomer. It depends on Zn(2+) as a cofactor.

It is found in the cytoplasm. It carries out the reaction tRNA(Cys) + L-cysteine + ATP = L-cysteinyl-tRNA(Cys) + AMP + diphosphate. The protein is Cysteine--tRNA ligase of Shewanella oneidensis (strain ATCC 700550 / JCM 31522 / CIP 106686 / LMG 19005 / NCIMB 14063 / MR-1).